Consider the following 277-residue polypeptide: tRNA pseudouridine synthase B (277 aa).

Asp-38 functions as the Nucleophile in the catalytic mechanism.

It belongs to the pseudouridine synthase TruB family. Type 1 subfamily.

It catalyses the reaction uridine(55) in tRNA = pseudouridine(55) in tRNA. Responsible for synthesis of pseudouridine from uracil-55 in the psi GC loop of transfer RNAs. The polypeptide is tRNA pseudouridine synthase B (Sulfurovum sp. (strain NBC37-1)).